The sequence spans 253 residues: Tryptophan synthase alpha chain (253 aa).

Catalysis depends on proton acceptor residues Glu-47 and Asp-58.

This sequence belongs to the TrpA family. Tetramer of two alpha and two beta chains.

The enzyme catalyses (1S,2R)-1-C-(indol-3-yl)glycerol 3-phosphate + L-serine = D-glyceraldehyde 3-phosphate + L-tryptophan + H2O. The protein operates within amino-acid biosynthesis; L-tryptophan biosynthesis; L-tryptophan from chorismate: step 5/5. The alpha subunit is responsible for the aldol cleavage of indoleglycerol phosphate to indole and glyceraldehyde 3-phosphate. The protein is Tryptophan synthase alpha chain of Lactococcus lactis subsp. cremoris (strain MG1363).